The primary structure comprises 174 residues: uncharacterized protein (174 aa).

This is an uncharacterized protein from Caenorhabditis elegans.